We begin with the raw amino-acid sequence, 268 residues long: Glutamate racemase (268 aa).

Residues 10–11 and 42–43 contribute to the substrate site; these read DS and YG. The active-site Proton donor/acceptor is the Cys73. 74-75 contacts substrate; sequence NT. The active-site Proton donor/acceptor is the Cys184. 185-186 is a substrate binding site; that stretch reads TH.

It belongs to the aspartate/glutamate racemases family.

The enzyme catalyses L-glutamate = D-glutamate. The protein operates within cell wall biogenesis; peptidoglycan biosynthesis. Its function is as follows. Provides the (R)-glutamate required for cell wall biosynthesis. The protein is Glutamate racemase of Carnobacterium sp. (strain St2).